A 167-amino-acid chain; its full sequence is Pathogenesis-related protein PRMS (167 aa).

The N-terminal stretch at 1–27 (MEASNKLAVLLLWLVMAAATAVHPSYS) is a signal peptide. The 119-residue stretch at 37-155 (PQNSARAAVG…NRGVFIICNY (119 aa)) folds into the SCP domain. Intrachain disulfides connect Cys71-Cys143, Cys116-Cys122, and Cys138-Cys153.

It belongs to the CRISP family.

Functionally, probably involved in the defense reaction of plants against pathogens. The chain is Pathogenesis-related protein PRMS (PRMS) from Zea mays (Maize).